The following is a 72-amino-acid chain: UPF0154 protein EF_1734 (72 aa).

A helical transmembrane segment spans residues 4-26 (GWVVLIAVIALLVGAAGGFFLAR).

It belongs to the UPF0154 family.

It is found in the membrane. The chain is UPF0154 protein EF_1734 from Enterococcus faecalis (strain ATCC 700802 / V583).